The primary structure comprises 78 residues: Exodeoxyribonuclease 7 small subunit (78 aa).

The protein belongs to the XseB family. Heterooligomer composed of large and small subunits.

It localises to the cytoplasm. The catalysed reaction is Exonucleolytic cleavage in either 5'- to 3'- or 3'- to 5'-direction to yield nucleoside 5'-phosphates.. Its function is as follows. Bidirectionally degrades single-stranded DNA into large acid-insoluble oligonucleotides, which are then degraded further into small acid-soluble oligonucleotides. This Cutibacterium acnes (strain DSM 16379 / KPA171202) (Propionibacterium acnes) protein is Exodeoxyribonuclease 7 small subunit.